We begin with the raw amino-acid sequence, 569 residues long: 4-hydroxy-7-methoxy-3-oxo-3,4-dihydro-2H-1,4-benzoxazin-2-yl glucoside beta-D-glucosidase 1b, chloroplastic (569 aa).

The transit peptide at 1-50 directs the protein to the chloroplast; the sequence is MALLAAATLNPTTHLSLRSRAGRNSENLWLRSTASSQKSKGRFCNLTIRA. A beta-D-glucoside contacts are provided by residues Gln-92, His-194, and 239–240; that span reads NE. The Proton donor role is filled by Glu-240. A disulfide bridge links Cys-259 with Cys-265. Residues Tyr-383, Glu-456, Trp-504, 511–512, and Phe-520 each bind a beta-D-glucoside; that span reads EW. Glu-456 (nucleophile) is an active-site residue.

It belongs to the glycosyl hydrolase 1 family. As to quaternary structure, homo- and heterohexamers. In terms of tissue distribution, expressed in young seedlings early after germination.

Its subcellular location is the plastid. It localises to the chloroplast. The enzyme catalyses Hydrolysis of terminal, non-reducing beta-D-glucosyl residues with release of beta-D-glucose.. The catalysed reaction is DIMBOA beta-D-glucoside + H2O = DIMBOA + D-glucose. It carries out the reaction DIBOA beta-D-glucoside + H2O = DIBOA + D-glucose. In terms of biological role, acts in defense of young plant parts against pests via the production of hydroxamic acids from hydroxamic acid glucosides. Enzymatic activity is highly correlated with plant growth. The preferred substrate is DIMBOA-beta-D-glucoside. The polypeptide is 4-hydroxy-7-methoxy-3-oxo-3,4-dihydro-2H-1,4-benzoxazin-2-yl glucoside beta-D-glucosidase 1b, chloroplastic (GLU1B) (Triticum aestivum (Wheat)).